We begin with the raw amino-acid sequence, 228 residues long: L-ribulose-5-phosphate 4-epimerase UlaF (228 aa).

Residues 26 to 27 (GN), 43 to 44 (SG), and 72 to 73 (SS) each bind substrate. Residues D74, H93, and H95 each contribute to the Zn(2+) site. D118 serves as the catalytic Proton donor/acceptor. H167 contributes to the Zn(2+) binding site. The Proton donor/acceptor role is filled by Y225.

The protein belongs to the aldolase class II family. AraD/FucA subfamily. The cofactor is Zn(2+).

The enzyme catalyses L-ribulose 5-phosphate = D-xylulose 5-phosphate. Its pathway is cofactor degradation; L-ascorbate degradation; D-xylulose 5-phosphate from L-ascorbate: step 4/4. In terms of biological role, catalyzes the isomerization of L-ribulose 5-phosphate to D-xylulose 5-phosphate. Is involved in the anaerobic L-ascorbate utilization. In Shigella dysenteriae serotype 1 (strain Sd197), this protein is L-ribulose-5-phosphate 4-epimerase UlaF.